The sequence spans 304 residues: Choline-phosphate cytidylyltransferase 2 (304 aa).

CTP contacts are provided by residues 28-36 (IFDLFHFGH) and Lys-66. 2 residues coordinate substrate: Lys-66 and Trp-95. Residues 112 to 113 (HD), Tyr-117, and 142 to 146 (RTEGI) contribute to the CTP site. The disordered stretch occupies residues 266 to 292 (QNGLTISKDNDDEQMSDDNEFAEEDCV). Residues 275-291 (NDDEQMSDDNEFAEEDC) show a composition bias toward acidic residues.

Belongs to the cytidylyltransferase family.

It carries out the reaction phosphocholine + CTP + H(+) = CDP-choline + diphosphate. The protein operates within phospholipid metabolism; phosphatidylcholine biosynthesis; phosphatidylcholine from phosphocholine: step 1/2. Plays an important role in the biosynthesis of the phospholipid phosphatidylcholine. Catalyzes the formation of CDP-choline. This Arabidopsis thaliana (Mouse-ear cress) protein is Choline-phosphate cytidylyltransferase 2.